Consider the following 626-residue polypeptide: Putative Xaa-Pro dipeptidyl-peptidase (626 aa).

Catalysis depends on charge relay system residues Ser231, Asp348, and His379.

It belongs to the peptidase S15 family.

The enzyme catalyses Hydrolyzes Xaa-Pro-|- bonds to release unblocked, N-terminal dipeptides from substrates including Ala-Pro-|-p-nitroanilide and (sequentially) Tyr-Pro-|-Phe-Pro-|-Gly-Pro-|-Ile.. This chain is Putative Xaa-Pro dipeptidyl-peptidase, found in Rhodopirellula baltica (strain DSM 10527 / NCIMB 13988 / SH1).